Reading from the N-terminus, the 917-residue chain is Hexokinase-1 (917 aa).

N-acetylmethionine is present on M1. The tract at residues 1–10 (MIAAQLLAYY) is mitochondrial-binding peptide (MBP). Hexokinase domains follow at residues 16-458 (DDQV…MVTA) and 464-906 (AEQH…LITA). Residues R30 and 84 to 89 (DLGGSS) contribute to the ATP site. The segment at 73–207 (DGSEKGDFIA…DYDANIVAVV (135 aa)) is hexokinase small subdomain 1. A D-glucose 6-phosphate-binding site is contributed by 84–91 (DLGGSSFR). Residues S155, 172–173 (TK), and 208–209 (ND) contribute to the D-glucose site. Residues 208-447 (NDTVGTMMTC…SDVRFLLSES (240 aa)) are hexokinase large subdomain 1. D-glucose 6-phosphate-binding residues include D209 and T232. Residues N235, E260, and 291-294 (QLFE) contribute to the D-glucose site. Position 337 is a phosphoserine (S337). N345 is a binding site for ATP. 413–415 (DGS) provides a ligand contact to D-glucose 6-phosphate. 425–426 (RR) provides a ligand contact to ATP. D-glucose 6-phosphate-binding positions include S449 and 532–536 (DLGGT). The tract at residues 521–655 (DGTENGDFLA…EFDLDVVAVV (135 aa)) is hexokinase small subdomain 2. Residue 532–537 (DLGGTN) participates in ATP binding. D-glucose is bound by residues 603–604 (SF), 620–621 (TK), and 656–657 (ND). The segment at 656 to 895 (NDTVGTMMTC…CNVSFLLSED (240 aa)) is hexokinase large subdomain 2. 2 residues coordinate D-glucose 6-phosphate: D657 and T680. Position 680 (T680) interacts with ATP. D-glucose-binding positions include 682–683 (SN), E708, and E742. ATP is bound by residues 747–748 (GM), 784–788 (TKFLS), and 863–867 (TLYKL). D-glucose 6-phosphate contacts are provided by residues 861-863 (DGT) and S897.

The protein belongs to the hexokinase family. Monomer. Interacts with RABL2/RABL2A; binds preferentially to GTP-bound RABL2. Interacts with VDAC1. The HK1-VDAC1 complex interacts with ATF2. Interacts (via N-terminal spermatogenic cell-specific region) with PFKM (via C-terminus). Interacts with SMAD5. As to expression, isoform 2: Erythrocyte specific. Isoform 3: Testis-specific. Isoform 4: Testis-specific.

It is found in the mitochondrion outer membrane. It localises to the cytoplasm. The protein localises to the cytosol. The enzyme catalyses a D-hexose + ATP = a D-hexose 6-phosphate + ADP + H(+). It catalyses the reaction D-fructose + ATP = D-fructose 6-phosphate + ADP + H(+). The catalysed reaction is D-glucose + ATP = D-glucose 6-phosphate + ADP + H(+). It carries out the reaction D-mannose + ATP = D-mannose 6-phosphate + ADP + H(+). The enzyme catalyses D-glucosamine + ATP = D-glucosamine 6-phosphate + ADP + H(+). It functions in the pathway carbohydrate metabolism; hexose metabolism. It participates in carbohydrate degradation; glycolysis; D-glyceraldehyde 3-phosphate and glycerone phosphate from D-glucose: step 1/4. Hexokinase is an allosteric enzyme inhibited by its product D-glucose 6-phosphate. Hexokinase activity is inhibited by N-acetyl-D-glucosamine. Functionally, catalyzes the phosphorylation of various hexoses, such as D-glucose, D-glucosamine, D-fructose, D-mannose and 2-deoxy-D-glucose, to hexose 6-phosphate (D-glucose 6-phosphate, D-glucosamine 6-phosphate, D-fructose 6-phosphate, D-mannose 6-phosphate and 2-deoxy-D-glucose 6-phosphate, respectively). Does not phosphorylate N-acetyl-D-glucosamine. Mediates the initial step of glycolysis by catalyzing phosphorylation of D-glucose to D-glucose 6-phosphate. Involved in innate immunity and inflammation by acting as a pattern recognition receptor for bacterial peptidoglycan. When released in the cytosol, N-acetyl-D-glucosamine component of bacterial peptidoglycan inhibits the hexokinase activity of HK1 and causes its dissociation from mitochondrial outer membrane, thereby activating the NLRP3 inflammasome. This is Hexokinase-1 from Homo sapiens (Human).